We begin with the raw amino-acid sequence, 644 residues long: MSKVYLNSDMINHLNSTVQAYFNLWLEKQNAIMRSQPQIIQDNQKLIGITTLVASIFTLYVLVKIISTPAKCSSSYKPVKFSLPAPEAAQNNWKGKRSVSTNIWNPEEPNFIQCHCPATGQYLGSFPSKTEADIDEMVSKAGKAQSTWGNSDFSRRLRVLASLHDYILNNQDLIARVACRDSGKTMLDASMGEILVTLEKIQWTIKHGQRALQPSRRPGPTNFFMKWYKGAEIRYEPLGVISSIVSWNYPFHNLLGPIIAALFTGNAIVVKCSEQVVWSSEFFVELIRKCLEACDEDPDLVQLCYCLPPTENDDSANYFTSHPGFKHITFIGSQPVAHYILKCAAKSLTPVVVELGGKDAFIVLDSAKNLDALSSIIMRGTFQSSGQNCIGIERVIVSKENYDDLVKILNDRMTANPLRQGSDIDHLENVDMGAMISDNRFDELEALVKDAVAKGARLLQGGSRFKHPKYPQGHYFQPTLLVDVTPEMKIAQNEVFGPILVMMKAKNTDHCVQLANSAPFGLGGSVFGADIKECNYVANSLQTGNVAINDFATFYVCQLPFGGINGSGYGKFGGEEGLLGLCNAKSVCFDTLPFVSTQIPKPLDYPIRNNAKAWNFVKSFIVGAYTNSTWQRIKSLFSLAKEAS.

The N-linked (GlcNAc...) asparagine glycan is linked to Asn15. Residue Glu354 is the Proton acceptor of the active site. Cys389 (nucleophile) is an active-site residue. N-linked (GlcNAc...) asparagine glycans are attached at residues Asn565 and Asn627.

Belongs to the aldehyde dehydrogenase family. In terms of processing, N-glycosylated.

It is found in the endoplasmic reticulum. The protein is Putative aldehyde dehydrogenase-like protein YHR039C (MSC7) of Saccharomyces cerevisiae (strain ATCC 204508 / S288c) (Baker's yeast).